Here is a 270-residue protein sequence, read N- to C-terminus: Energy-coupling factor transporter transmembrane protein EcfT (270 aa).

Transmembrane regions (helical) follow at residues 36 to 56 (LFIV…LISI), 72 to 92 (PIFI…GGAN), 108 to 128 (LIMA…TSLL), and 248 to 268 (FIAS…RIWW).

It belongs to the energy-coupling factor EcfT family. In terms of assembly, forms a stable energy-coupling factor (ECF) transporter complex composed of 2 membrane-embedded substrate-binding proteins (S component), 2 ATP-binding proteins (A component) and 2 transmembrane proteins (T component). May be able to interact with more than 1 S component at a time.

The protein resides in the cell membrane. In terms of biological role, transmembrane (T) component of an energy-coupling factor (ECF) ABC-transporter complex. Unlike classic ABC transporters this ECF transporter provides the energy necessary to transport a number of different substrates. The sequence is that of Energy-coupling factor transporter transmembrane protein EcfT from Clostridium kluyveri (strain ATCC 8527 / DSM 555 / NBRC 12016 / NCIMB 10680 / K1).